A 105-amino-acid polypeptide reads, in one-letter code: Insulin (105 aa).

The N-terminal stretch at 1–22 is a signal peptide; sequence MAFWLQAASLLVLLALSPGVDA. Cystine bridges form between C29–C91, C41–C104, and C90–C95. The propeptide at 53-82 is c peptide; it reads DVDPLIGFLSPKSAKENEEYPFKDQTEMMV.

It belongs to the insulin family. In terms of assembly, heterodimer of a B chain and an A chain linked by two disulfide bonds.

It localises to the secreted. Its function is as follows. Insulin decreases blood glucose concentration. It increases cell permeability to monosaccharides, amino acids and fatty acids. It accelerates glycolysis, the pentose phosphate cycle, and glycogen synthesis in liver. The polypeptide is Insulin (ins) (Oncorhynchus keta (Chum salmon)).